The following is an 871-amino-acid chain: Protein translocase subunit SecA (871 aa).

Residues Q80, 98-102 (GEGKT), and D537 each bind ATP.

It belongs to the SecA family. In terms of assembly, monomer and homodimer. Part of the essential Sec protein translocation apparatus which comprises SecA, SecYEG and auxiliary proteins SecDF. Other proteins may also be involved.

Its subcellular location is the cell inner membrane. It is found in the cytoplasm. It catalyses the reaction ATP + H2O + cellular proteinSide 1 = ADP + phosphate + cellular proteinSide 2.. In terms of biological role, part of the Sec protein translocase complex. Interacts with the SecYEG preprotein conducting channel. Has a central role in coupling the hydrolysis of ATP to the transfer of proteins into and across the cell membrane, serving as an ATP-driven molecular motor driving the stepwise translocation of polypeptide chains across the membrane. This is Protein translocase subunit SecA from Thermotoga sp. (strain RQ2).